Consider the following 1057-residue polypeptide: Structural maintenance of chromosomes protein 6B (1057 aa).

The 1026-residue stretch at 22–1047 (ILRIKVENFM…ISMVKSHERI (1026 aa)) folds into the Zinc-hook domain. Residue 49-56 (GQNGSGKS) participates in ATP binding. A coiled-coil region spans residues 135-448 (KVSNKRDELR…NDLKKHQTNK (314 aa)). Positions 449 to 632 (VTAFGGDRVI…PPLSRRPSRL (184 aa)) are flexible hinge. Residues 633–904 (CASFDDQIKD…QDHREKLMAC (272 aa)) are a coiled coil. A compositionally biased stretch (basic and acidic residues) spans 818–828 (KNKRKESDQKA). Residues 818–845 (KNKRKESDQKASEICPESEIESLGPWDG) form a disordered region.

The protein belongs to the SMC family. SMC6 subfamily. Forms a heterodimer with SMC5. The SMC5-SMC6 complex is composed of the SMC5 and SMC6 heterodimer attached via their hinge domain and from the non-SMC subunit NSE4A or NSE4B. Expressed in seedlings, rosette leaves and floral buds.

The protein localises to the nucleus. It localises to the chromosome. Functionally, core component of the SMC5-SMC6 complex that promotes sister chromatid alignment after DNA damage and facilitates double-stranded DNA breaks (DSBs) repair via homologous recombination between sister chromatids. The sequence is that of Structural maintenance of chromosomes protein 6B (SMC6B) from Arabidopsis thaliana (Mouse-ear cress).